Here is a 323-residue protein sequence, read N- to C-terminus: Methenyltetrahydromethanopterin cyclohydrolase (323 aa).

The protein belongs to the MCH family.

The protein resides in the cytoplasm. It catalyses the reaction 5,10-methenyl-5,6,7,8-tetrahydromethanopterin + H2O = N(5)-formyl-5,6,7,8-tetrahydromethanopterin + H(+). It participates in one-carbon metabolism; methanogenesis from CO(2); 5,10-methenyl-5,6,7,8-tetrahydromethanopterin from CO(2): step 3/3. Functionally, catalyzes the reversible interconversion of 5-formyl-H(4)MPT to methenyl-H(4)MPT(+). This is Methenyltetrahydromethanopterin cyclohydrolase from Methanococcus maripaludis (strain C7 / ATCC BAA-1331).